The chain runs to 92 residues: uncharacterized protein (92 aa).

Residues 1 to 23 (MNPAIVVIIVLLVAALLIWACKA) form the signal peptide.

This is an uncharacterized protein from Acheta domesticus (House cricket).